Reading from the N-terminus, the 97-residue chain is Putative pterin-4-alpha-carbinolamine dehydratase (97 aa).

This sequence belongs to the pterin-4-alpha-carbinolamine dehydratase family.

It catalyses the reaction (4aS,6R)-4a-hydroxy-L-erythro-5,6,7,8-tetrahydrobiopterin = (6R)-L-erythro-6,7-dihydrobiopterin + H2O. This chain is Putative pterin-4-alpha-carbinolamine dehydratase, found in Ruegeria pomeroyi (strain ATCC 700808 / DSM 15171 / DSS-3) (Silicibacter pomeroyi).